A 567-amino-acid chain; its full sequence is MAQRIFTLILLLCSTSAFAGLFDAPGRSQFVPADRAFVFDFQQNQHDLTLSWQVKEGYYLYRKQISITPTKADIAAVQLPAGVWHEDEFYGKSEIYRKRLNVPVTVNQAAAGATLTITYQGCADAGFCYPPETKTVPLSEVAAAIDATPTPAVTQTGETSKPAAQLPFSALWALLIGIGIAFTPCVLPMYPLISGIVLGGRQRLSTGRALLLAFIYVQGMALTYTALGLVVAAAGLQFQAALQHPYVLIGLAIVFTLLALSMFGLFTLQLPSSLQTRLTLMSNRQQGGSPGGVFVMGAIAGLICSPCTTAPLSAILLYIAQSGNMWLGGGTLYLYALGMGLPLMLVTVFGNRLLPKSGPWMAHVKTAFGFVILALPVFLLERIIGEAWGLRLWSLLGVAFFGWAFITSLQARRAWMRIVQIILLAAALISVRPLQDWAFGSPSAQAPAHLNFTAISTVDELNQALAQAKGKPVMLDFYADWCVACKEFEKYTFSDPRVQQVLGDTVLLQANVTANNAQDVALLKHLQVLGLPTILFFDAQGQEQPQARVTGFMDAATFSAHLHDRQP.

The first 19 residues, 1 to 19 (MAQRIFTLILLLCSTSAFA), serve as a signal peptide directing secretion. 2 disulfides stabilise this stretch: Cys122/Cys128 and Cys185/Cys307. 7 helical membrane passes run 170–192 (ALWA…MYPL), 212–234 (LAFI…VAAA), 246–268 (YVLI…LFTL), 297–319 (GAIA…LLYI), 326–348 (WLGG…LVTV), 358–380 (GPWM…VFLL), and 387–409 (AWGL…ITSL). In terms of domain architecture, Thioredoxin spans 435-567 (QDWAFGSPSA…FSAHLHDRQP (133 aa)). Cys482 and Cys485 are oxidised to a cystine.

The protein belongs to the thioredoxin family. DsbD subfamily.

The protein resides in the cell inner membrane. It catalyses the reaction [protein]-dithiol + NAD(+) = [protein]-disulfide + NADH + H(+). It carries out the reaction [protein]-dithiol + NADP(+) = [protein]-disulfide + NADPH + H(+). Its function is as follows. Required to facilitate the formation of correct disulfide bonds in some periplasmic proteins and for the assembly of the periplasmic c-type cytochromes. Acts by transferring electrons from cytoplasmic thioredoxin to the periplasm. This transfer involves a cascade of disulfide bond formation and reduction steps. The protein is Thiol:disulfide interchange protein DsbD of Salmonella typhi.